A 113-amino-acid chain; its full sequence is Cholecystoxin (113 aa).

The signal sequence occupies residues methionine 1–glycine 20. Residues glutamine 21–arginine 79 constitute a propeptide that is removed on maturation. Positions alanine 77–glycine 97 are disordered. Sulfotyrosine is present on tyrosine 95. Phenylalanine amide is present on phenylalanine 101. The propeptide occupies glycine 102 to serine 113.

The protein belongs to the gastrin/cholecystokinin family. Expressed by the mandibular venom gland.

It localises to the secreted. Cholecystokinin-22: hypotensive neuropeptide that binds cholecystokinin receptor type A receptor (CCKAR). Functionally, cholecystokinin-8: hypotensive neuropeptide that binds cholecystokinin receptor type A receptor (CCKAR). The protein is Cholecystoxin of Varanus varius (Lace monitor lizard).